A 651-amino-acid chain; its full sequence is MTYQEYLEKVKLAKEWMRAYYEDDEPLASDEEYDKLIRELKEFEALYKDKISKDSPTQNIAPTIQSEFHKITHSAKMWSMEDVFDEAELRAWAKRAKCEFDFFIEPKFDGASLNLTYENGKLISGATRGDGEIGEDITLNVKEISNIPKIIPYKDKIEIRGEVVILKEDFEKINEKRAKDGLSLFANPRNGASGSLRQLDTSITKERNLKFYPWGVGENSLKFSKHSEVMEFIRSLGFLKDDFVYCVKTLDEVLEKYHELLEKRDQKPMMMDGMVVRVDDLKKCQELGYTVKFPKFMAAFKFPALEKTTTLLGVNLQVGRSGVITPVAILEPVELDGVVVKSATLHNFDEITRLGVMIGDSVSVIRSGDVIPKITKVFTQRRDGLESKITKPSLCPECLSELLDEGAFLKCQNLDCKARLVNSIIYFVSKKCLNIDGLGENIVELLFKEGKITNIESIFFLKYDDFLNLEGFKEKKINNLLNAIENAKKCSLSRFITALGIEHIGEVAAKKLAQSFGFDWFLQSYEAYVNLEGFGEQMAKSLQEFTKINHQRIKHFYEILHLEDEKKELALNENISNKTFVITGTLSKSRDHFKELIESFGAKVSSSVSKKTDFVLYGSEAGSKLEKAQSLGVKCINEDEFNALLGGDDEV.

NAD(+)-binding positions include 30–34 (DEEYD), 79–80 (SM), and Glu105. The N6-AMP-lysine intermediate role is filled by Lys107. 3 residues coordinate NAD(+): Arg128, Glu162, and Lys301. Positions 395, 398, 411, and 416 each coordinate Zn(2+). The region spanning 570 to 651 (ALNENISNKT…NALLGGDDEV (82 aa)) is the BRCT domain.

Belongs to the NAD-dependent DNA ligase family. LigA subfamily. It depends on Mg(2+) as a cofactor. The cofactor is Mn(2+).

The enzyme catalyses NAD(+) + (deoxyribonucleotide)n-3'-hydroxyl + 5'-phospho-(deoxyribonucleotide)m = (deoxyribonucleotide)n+m + AMP + beta-nicotinamide D-nucleotide.. DNA ligase that catalyzes the formation of phosphodiester linkages between 5'-phosphoryl and 3'-hydroxyl groups in double-stranded DNA using NAD as a coenzyme and as the energy source for the reaction. It is essential for DNA replication and repair of damaged DNA. This chain is DNA ligase, found in Campylobacter lari (strain RM2100 / D67 / ATCC BAA-1060).